Here is a 749-residue protein sequence, read N- to C-terminus: Transcription factor RFX3 (749 aa).

The segment at residues 183-258 is a DNA-binding region (RFX-type winged-helix); the sequence is HLQWLLDNYE…YHYYGIRVKP (76 aa). Positions 663–699 are disordered; the sequence is VSPGNLDKDEGSEVESEMDEELDDSSEPQAKREKTEL. Residues 674-688 are compositionally biased toward acidic residues; the sequence is SEVESEMDEELDDSS.

This sequence belongs to the RFX family. As to quaternary structure, heterodimer; heterodimerizes with RFX1 and RFX2, and RFX6.

The protein resides in the nucleus. Its function is as follows. Transcription factor required for ciliogenesis and islet cell differentiation during endocrine pancreas development. Essential for the differentiation of nodal monocilia and left-right asymmetry specification during embryogenesis. Required for the biogenesis of motile cilia by governing growth and beating efficiency of motile cells. Also required for ciliated ependymal cell differentiation. Regulates the expression of genes involved in ciliary assembly (DYNC2LI1, FOXJ1 and BBS4) and genes involved in ciliary motility (DNAH11, DNAH9 and DNAH5). Together with RFX6, participates in the differentiation of 4 of the 5 islet cell types during endocrine pancreas development, with the exception of pancreatic PP (polypeptide-producing) cells. Regulates transcription by forming a heterodimer with another RFX protein and binding to the X-box in the promoter of target genes. Represses transcription of MAP1A in non-neuronal cells but not in neuronal cells. In Homo sapiens (Human), this protein is Transcription factor RFX3 (RFX3).